A 246-amino-acid polypeptide reads, in one-letter code: Alpha-amylase inhibitor 1 (246 aa).

Positions 1-23 are cleaved as a signal peptide; it reads MIMASSKLLSLALFLALLSHANS. N-linked (GlcNAc...) asparagine glycosylation is found at N35, N88, and N163. The propeptide occupies 240–246; that stretch reads IVLNKIL.

It belongs to the leguminous lectin family. As to quaternary structure, heterodimer of chain 1 and chain 2. Post-translationally, proteolytic processing yields active form.

Its function is as follows. Lectin and alpha-amylase inhibitor. Acts as a defensive protein against insects. The polypeptide is Alpha-amylase inhibitor 1 (LLP) (Phaseolus vulgaris (Kidney bean)).